Here is a 589-residue protein sequence, read N- to C-terminus: Delta-like protein 3 (589 aa).

A signal peptide spans 1–32 (MVSLQVSSLPQTLILAFLLPQALPAGVFELQI). Residues 33–494 (HSFGPGPGPG…LRQADSQRFL (462 aa)) lie on the Extracellular side of the membrane. Residues 174-213 (ARCEPPAVGAACARLCRSRSAPSRCGPGLRPCTPFPDECE) enclose the DSL domain. EGF-like domains are found at residues 218-251 (SLTV…PLCT), 276-312 (GPGP…PRCE), 314-353 (SGVT…SNCE), 355-391 (RVDR…PRCE), 393-429 (DLDD…RDCR), and 431-467 (RADP…VRCE). 18 disulfide bridges follow: Cys222-Cys233, Cys226-Cys239, Cys241-Cys250, Cys280-Cys291, Cys285-Cys300, Cys302-Cys311, Cys318-Cys329, Cys323-Cys341, Cys343-Cys352, Cys359-Cys370, Cys364-Cys379, Cys381-Cys390, Cys397-Cys408, Cys402-Cys417, Cys419-Cys428, Cys435-Cys446, Cys440-Cys455, and Cys457-Cys466. Residues 495-515 (LPPALGLLAAAALAGAALLLI) traverse the membrane as a helical segment. The Cytoplasmic portion of the chain corresponds to 516 to 589 (HVRRRGPGRD…PAPSIYAREA (74 aa)). The tract at residues 552-574 (QDGAGDGPTSSADWNHPEDGDSR) is disordered.

As to quaternary structure, can bind and activate Notch-1 or another Notch receptor. Ubiquitinated by MIB (MIB1 or MIB2), leading to its endocytosis and subsequent degradation.

The protein localises to the membrane. Its function is as follows. Inhibits primary neurogenesis. May be required to divert neurons along a specific differentiation pathway. Plays a role in the formation of somite boundaries during segmentation of the paraxial mesoderm. In Rattus norvegicus (Rat), this protein is Delta-like protein 3 (Dll3).